A 633-amino-acid chain; its full sequence is Glutamyl-tRNA(Gln) amidotransferase subunit E (633 aa).

A disordered region spans residues 415-437 (LDDGTTKFLRPQPGSARMYPETD).

The protein belongs to the GatB/GatE family. GatE subfamily. As to quaternary structure, heterodimer of GatD and GatE.

The enzyme catalyses L-glutamyl-tRNA(Gln) + L-glutamine + ATP + H2O = L-glutaminyl-tRNA(Gln) + L-glutamate + ADP + phosphate + H(+). Its function is as follows. Allows the formation of correctly charged Gln-tRNA(Gln) through the transamidation of misacylated Glu-tRNA(Gln) in organisms which lack glutaminyl-tRNA synthetase. The reaction takes place in the presence of glutamine and ATP through an activated gamma-phospho-Glu-tRNA(Gln). The GatDE system is specific for glutamate and does not act on aspartate. This chain is Glutamyl-tRNA(Gln) amidotransferase subunit E, found in Saccharolobus solfataricus (strain ATCC 35092 / DSM 1617 / JCM 11322 / P2) (Sulfolobus solfataricus).